A 264-amino-acid polypeptide reads, in one-letter code: Thymidylate synthase (264 aa).

R21 is a dUMP binding site. H51 lines the (6R)-5,10-methylene-5,6,7,8-tetrahydrofolate pocket. 126-127 (RR) serves as a coordination point for dUMP. Residue C146 is the Nucleophile of the active site. Residues 166–169 (RSAD), N177, and 207–209 (HLY) contribute to the dUMP site. A (6R)-5,10-methylene-5,6,7,8-tetrahydrofolate-binding site is contributed by D169. A263 lines the (6R)-5,10-methylene-5,6,7,8-tetrahydrofolate pocket.

Belongs to the thymidylate synthase family. Bacterial-type ThyA subfamily. As to quaternary structure, homodimer.

Its subcellular location is the cytoplasm. The enzyme catalyses dUMP + (6R)-5,10-methylene-5,6,7,8-tetrahydrofolate = 7,8-dihydrofolate + dTMP. The protein operates within pyrimidine metabolism; dTTP biosynthesis. In terms of biological role, catalyzes the reductive methylation of 2'-deoxyuridine-5'-monophosphate (dUMP) to 2'-deoxythymidine-5'-monophosphate (dTMP) while utilizing 5,10-methylenetetrahydrofolate (mTHF) as the methyl donor and reductant in the reaction, yielding dihydrofolate (DHF) as a by-product. This enzymatic reaction provides an intracellular de novo source of dTMP, an essential precursor for DNA biosynthesis. The chain is Thymidylate synthase from Legionella pneumophila (strain Paris).